Reading from the N-terminus, the 304-residue chain is Phosphoribosylaminoimidazole-succinocarboxamide synthase (304 aa).

This sequence belongs to the SAICAR synthetase family.

The catalysed reaction is 5-amino-1-(5-phospho-D-ribosyl)imidazole-4-carboxylate + L-aspartate + ATP = (2S)-2-[5-amino-1-(5-phospho-beta-D-ribosyl)imidazole-4-carboxamido]succinate + ADP + phosphate + 2 H(+). The protein operates within purine metabolism; IMP biosynthesis via de novo pathway; 5-amino-1-(5-phospho-D-ribosyl)imidazole-4-carboxamide from 5-amino-1-(5-phospho-D-ribosyl)imidazole-4-carboxylate: step 1/2. This chain is Phosphoribosylaminoimidazole-succinocarboxamide synthase (ADE1), found in Komagataella pastoris (Yeast).